Consider the following 179-residue polypeptide: ATP synthase subunit b, chloroplastic (179 aa).

A helical membrane pass occupies residues 35-51 (IVILGGGIFKLGSTALS).

The protein belongs to the ATPase B chain family. F-type ATPases have 2 components, F(1) - the catalytic core - and F(0) - the membrane proton channel. F(1) has five subunits: alpha(3), beta(3), gamma(1), delta(1), epsilon(1). F(0) has four main subunits: a(1), b(1), b'(1) and c(10-14). The alpha and beta chains form an alternating ring which encloses part of the gamma chain. F(1) is attached to F(0) by a central stalk formed by the gamma and epsilon chains, while a peripheral stalk is formed by the delta, b and b' chains.

It is found in the plastid. The protein localises to the chloroplast thylakoid membrane. F(1)F(0) ATP synthase produces ATP from ADP in the presence of a proton or sodium gradient. F-type ATPases consist of two structural domains, F(1) containing the extramembraneous catalytic core and F(0) containing the membrane proton channel, linked together by a central stalk and a peripheral stalk. During catalysis, ATP synthesis in the catalytic domain of F(1) is coupled via a rotary mechanism of the central stalk subunits to proton translocation. Functionally, component of the F(0) channel, it forms part of the peripheral stalk, linking F(1) to F(0). This is ATP synthase subunit b, chloroplastic from Emiliania huxleyi (Coccolithophore).